The chain runs to 190 residues: GTP cyclohydrolase 1 (190 aa).

Residues Cys75, His78, and Cys146 each coordinate Zn(2+).

The protein belongs to the GTP cyclohydrolase I family. In terms of assembly, homomer.

The catalysed reaction is GTP + H2O = 7,8-dihydroneopterin 3'-triphosphate + formate + H(+). It participates in cofactor biosynthesis; 7,8-dihydroneopterin triphosphate biosynthesis; 7,8-dihydroneopterin triphosphate from GTP: step 1/1. The protein is GTP cyclohydrolase 1 of Campylobacter lari (strain RM2100 / D67 / ATCC BAA-1060).